We begin with the raw amino-acid sequence, 400 residues long: Sphingosine 1-phosphate receptor 5 (400 aa).

Residues 1 to 41 (MEPGLLRPAPVSEVIVLHYNYTGKLRGARYQPGAGLRADAA) are Extracellular-facing. An N-linked (GlcNAc...) asparagine glycan is attached at Asn-20. Residues 42 to 62 (VCLAVCAFIVLENLAVLLVLV) form a helical membrane-spanning segment. At 63 to 68 (RHPRFH) the chain is on the cytoplasmic side. Residues 69–89 (APMFLLLGSLTLSDLLAGAAY) form a helical membrane-spanning segment. The Extracellular segment spans residues 90 to 111 (ATNILLSGPLTLRLSPALWFAR). A helical membrane pass occupies residues 112-132 (EGGVFVALAASVLSLLAIALE). Over 133–151 (RHLTMARRGPAPAASRART) the chain is Cytoplasmic. Residues 152-172 (LAMAVAAWGASLLLGLLPALG) traverse the membrane as a helical segment. Residues 173–192 (WNCLGRLETCSTVLPLYAKA) are Extracellular-facing. Residues 193–213 (YVLFCVLAFLGILAAICALYA) form a helical membrane-spanning segment. Residues 214-253 (RIYCQVRANARRLRAGPGSRRATSSSRSRHTPRSLALLRT) lie on the Cytoplasmic side of the membrane. Residues 254 to 274 (LSVVLLAFVACWGPLFLLLLL) form a helical membrane-spanning segment. Topologically, residues 275–288 (DVACPARACPVLLQ) are extracellular. Residues 289 to 309 (ADPFLGLAMANSLLNPIIYTF) traverse the membrane as a helical segment. Residues 310–400 (TNRDLRHALL…NRSLVPTATD (91 aa)) lie on the Cytoplasmic side of the membrane. Cys-324 carries the S-palmitoyl cysteine lipid modification. Residues 331-400 (QDSSNSLQRS…NRSLVPTATD (70 aa)) are disordered. Residues Ser-340, Ser-342, and Ser-384 each carry the phosphoserine modification. Residues 360 to 400 (DRSSSPSEHLSPQQDGVDTSCSTGSPGVATANRSLVPTATD) show a composition bias toward polar residues.

Belongs to the G-protein coupled receptor 1 family. Expressed in spleen and brain. In the CNS expression is restricted to oligodendrocytes.

It localises to the cell membrane. Its function is as follows. Receptor for the lysosphingolipid sphingosine 1-phosphate (S1P). S1P is a bioactive lysophospholipid that elicits diverse physiological effect on most types of cells and tissues. Is coupled to both the G(i/0)alpha and G(12) subclass of heteromeric G-proteins. S1P activation on oligodendroglial cells modulates two distinct functional pathways mediating either process retraction or cell survival. S1P activation on O4-positive pre-oligodendrocytes induces process retraction via a Rho kinase/collapsin response-mediated protein signaling pathway. The S1P-induced survival of mature oligodendrocytes is mediated through a pertussis toxin-sensitive, Akt-dependent pathway. S1P activation on oligodendroglial cells modulates two distinct functional pathways mediating either process retraction or cell survival. These effects depend on the developmental stage of the cell. In Mus musculus (Mouse), this protein is Sphingosine 1-phosphate receptor 5 (S1pr5).